The primary structure comprises 502 residues: Solute carrier family 2, facilitated glucose transporter member 5 (502 aa).

M1 is modified (N-acetylmethionine). Over 1 to 17 the chain is Cytoplasmic; the sequence is MEKEDQEKTGKLTLVLA. A helical transmembrane segment spans residues 18–38; the sequence is LATFLAAFGSSFQYGYNVAAV. Y31 provides a ligand contact to D-fructose. Residues 39 to 67 lie on the Extracellular side of the membrane; sequence NSPSEFMQQFYNDTYYDRNKENIESFTLT. An N-linked (GlcNAc...) asparagine glycan is attached at N50. Residues 68 to 90 traverse the membrane as a helical segment; it reads LLWSLTVSMFPFGGFIGSLMVGF. Topologically, residues 91–97 are cytoplasmic; that stretch reads LVNNLGR. A helical transmembrane segment spans residues 98–118; sequence KGALLFNNIFSILPAILMGCS. Residues 119–125 lie on the Extracellular side of the membrane; the sequence is KIAKSFE. A helical membrane pass occupies residues 126–148; it reads IIIASRLLVGICAGISSNVVPMY. The Cytoplasmic segment spans residues 149-160; sequence LGELAPKNLRGA. Residues 161 to 181 form a helical membrane-spanning segment; it reads LGVVPQLFITVGILVAQLFGL. Q166 contacts D-fructose. Residues 182-191 are Extracellular-facing; that stretch reads RSVLASEEGW. A helical transmembrane segment spans residues 192 to 212; that stretch reads PILLGLTGVPAGLQLLLLPFF. At 213 to 276 the chain is on the cytoplasmic side; the sequence is PESPRYLLIQ…LFRMQSLRWQ (64 aa). Residues 277-297 traverse the membrane as a helical segment; the sequence is LISTIVLMAGQQLSGVNAIYY. D-fructose contacts are provided by residues Q287 and 295–297; that span reads IYY. Topologically, residues 298–312 are extracellular; sequence YADQIYLSAGVKSND. Residues 313–333 traverse the membrane as a helical segment; it reads VQYVTAGTGAVNVFMTMVTVF. The Cytoplasmic portion of the chain corresponds to 334 to 341; that stretch reads VVELWGRR. A helical membrane pass occupies residues 342-362; sequence NLLLIGFSTCLTACIVLTVAL. At 363 to 370 the chain is on the extracellular side; sequence ALQNTISW. The chain crosses the membrane as a helical span at residues 371-393; that stretch reads MPYVSIVCVIVYVIGHAVGPSPI. H386 lines the D-fructose pocket. The Cytoplasmic segment spans residues 394 to 411; sequence PALFITEIFLQSSRPSAY. A helical membrane pass occupies residues 412-432; it reads MIGGSVHWLSNFIVGLIFPFI. Residue 418–419 participates in D-fructose binding; the sequence is HW. Over 433–438 the chain is Extracellular; it reads QVGLGP. Residues 439–459 traverse the membrane as a helical segment; it reads YSFIIFAIICLLTTIYIFMVV. Over 460–502 the chain is Cytoplasmic; the sequence is PETKGRTFVEINQIFAKKNKVSDVYPEKEEKELNDLPPATREQ.

It belongs to the major facilitator superfamily. Sugar transporter (TC 2.A.1.1) family. Glucose transporter subfamily. Detected in jejunum. Detected in kidney, skeletal muscle, brain and adipose tissue (at protein level). Detected in small intestine and in kidney, and at much lower levels in brain. Detected in enterocytes in duodenum, jejunum, and ileum.

The protein resides in the apical cell membrane. The protein localises to the cell membrane. Its subcellular location is the sarcolemma. The enzyme catalyses D-fructose(out) = D-fructose(in). Its activity is regulated as follows. Fructose uptake is inhibited by mercury ions. Fructose uptake is only slightly inhibited by cytochalasin B. Functionally, functions as a fructose transporter that has only low activity with other monosaccharides. Can mediate the uptake of deoxyglucose, but with low efficiency. Essential for fructose uptake in the small intestine. Plays a role in the regulation of salt uptake and blood pressure in response to dietary fructose. Required for the development of high blood pressure in response to high dietary fructose intake. This chain is Solute carrier family 2, facilitated glucose transporter member 5, found in Rattus norvegicus (Rat).